The following is a 116-amino-acid chain: Protein Wnt-5a (116 aa).

Ser-1 is lipidated: O-palmitoleoyl serine; by PORCN. Asn-69 and Asn-83 each carry an N-linked (GlcNAc...) asparagine glycan. Cys-82 and Cys-97 are disulfide-bonded.

Belongs to the Wnt family. Post-translationally, palmitoleoylation is required for efficient binding to frizzled receptors. Depalmitoleoylation leads to Wnt signaling pathway inhibition.

It localises to the secreted. The protein resides in the extracellular space. The protein localises to the extracellular matrix. Its function is as follows. Ligand for members of the frizzled family of seven transmembrane receptors. Can activate or inhibit canonical Wnt signaling, depending on receptor context. Required during embryogenesis for extension of the primary anterior-posterior axis. The protein is Protein Wnt-5a (WNT5A) of Anser caerulescens (Snow goose).